Reading from the N-terminus, the 684-residue chain is Galactocerebrosidase (684 aa).

Positions 1-42 are cleaved as a signal peptide; that stretch reads MANSQPKASQQRQAKVMTAAAGSASRVAVPLLLCALLVPGGA. Thr-109, Trp-151, and Asn-197 together coordinate substrate. Glu-198 functions as the Proton donor/acceptor in the catalytic mechanism. Glu-274 serves as the catalytic Nucleophile. Cys-287 and Cys-394 are joined by a disulfide. 2 N-linked (GlcNAc...) asparagine glycosylation sites follow: Asn-300 and Asn-379. Arg-396 contacts substrate. Asn-403, Asn-558, Asn-601, and Asn-645 each carry an N-linked (GlcNAc...) asparagine glycan.

The protein belongs to the glycosyl hydrolase 59 family. In terms of tissue distribution, detected in brain and kidney.

The protein localises to the lysosome. It catalyses the reaction a beta-D-galactosyl-(1&lt;-&gt;1')-N-acylsphing-4-enine + H2O = an N-acylsphing-4-enine + D-galactose. It carries out the reaction a D-galactosylceramide + H2O = an N-acyl-sphingoid base + D-galactose. The catalysed reaction is beta-D-galactosyl-(1&lt;-&gt;1)-sphing-4-enine + H2O = sphing-4-enine + D-galactose. Hydrolyzes the galactose ester bonds of glycolipids such as galactosylceramide and galactosylsphingosine. Enzyme with very low activity responsible for the lysosomal catabolism of galactosylceramide, a major lipid in myelin, kidney and epithelial cells of small intestine and colon. The protein is Galactocerebrosidase of Mus musculus (Mouse).